The following is a 501-amino-acid chain: Lysine--tRNA ligase (501 aa).

Residues glutamate 411 and glutamate 418 each contribute to the Mg(2+) site.

This sequence belongs to the class-II aminoacyl-tRNA synthetase family. As to quaternary structure, homodimer. Requires Mg(2+) as cofactor.

Its subcellular location is the cytoplasm. It catalyses the reaction tRNA(Lys) + L-lysine + ATP = L-lysyl-tRNA(Lys) + AMP + diphosphate. This Clostridium perfringens (strain 13 / Type A) protein is Lysine--tRNA ligase.